Reading from the N-terminus, the 252-residue chain is 2-succinyl-6-hydroxy-2,4-cyclohexadiene-1-carboxylate synthase (252 aa).

Belongs to the AB hydrolase superfamily. MenH family. In terms of assembly, monomer.

The enzyme catalyses 5-enolpyruvoyl-6-hydroxy-2-succinyl-cyclohex-3-ene-1-carboxylate = (1R,6R)-6-hydroxy-2-succinyl-cyclohexa-2,4-diene-1-carboxylate + pyruvate. Its pathway is quinol/quinone metabolism; 1,4-dihydroxy-2-naphthoate biosynthesis; 1,4-dihydroxy-2-naphthoate from chorismate: step 3/7. It participates in quinol/quinone metabolism; menaquinone biosynthesis. Catalyzes a proton abstraction reaction that results in 2,5-elimination of pyruvate from 2-succinyl-5-enolpyruvyl-6-hydroxy-3-cyclohexene-1-carboxylate (SEPHCHC) and the formation of 2-succinyl-6-hydroxy-2,4-cyclohexadiene-1-carboxylate (SHCHC). The protein is 2-succinyl-6-hydroxy-2,4-cyclohexadiene-1-carboxylate synthase of Salmonella enteritidis PT4 (strain P125109).